The chain runs to 114 residues: Nucleoid-associated protein PCC7424_2224 (114 aa).

It belongs to the YbaB/EbfC family. Homodimer.

Its subcellular location is the cytoplasm. It localises to the nucleoid. In terms of biological role, binds to DNA and alters its conformation. May be involved in regulation of gene expression, nucleoid organization and DNA protection. This Gloeothece citriformis (strain PCC 7424) (Cyanothece sp. (strain PCC 7424)) protein is Nucleoid-associated protein PCC7424_2224.